We begin with the raw amino-acid sequence, 359 residues long: tRNA-specific 2-thiouridylase MnmA (359 aa).

Residues 9-16 (GISGGVDS) and M35 each bind ATP. The tract at residues 95-97 (NPD) is interaction with target base in tRNA. The active-site Nucleophile is C100. Cysteines 100 and 197 form a disulfide. G124 is a binding site for ATP. Positions 147-149 (KDQ) are interaction with tRNA. C197 (cysteine persulfide intermediate) is an active-site residue. The interaction with tRNA stretch occupies residues 309-310 (RY).

Belongs to the MnmA/TRMU family.

It is found in the cytoplasm. The enzyme catalyses S-sulfanyl-L-cysteinyl-[protein] + uridine(34) in tRNA + AH2 + ATP = 2-thiouridine(34) in tRNA + L-cysteinyl-[protein] + A + AMP + diphosphate + H(+). Functionally, catalyzes the 2-thiolation of uridine at the wobble position (U34) of tRNA, leading to the formation of s(2)U34. The protein is tRNA-specific 2-thiouridylase MnmA of Francisella tularensis subsp. tularensis (strain FSC 198).